Here is a 505-residue protein sequence, read N- to C-terminus: N-succinylglutamate 5-semialdehyde dehydrogenase (505 aa).

234 to 239 (GSAHTG) lines the NAD(+) pocket. Active-site residues include Glu-257 and Cys-291.

It belongs to the aldehyde dehydrogenase family. AstD subfamily.

The enzyme catalyses N-succinyl-L-glutamate 5-semialdehyde + NAD(+) + H2O = N-succinyl-L-glutamate + NADH + 2 H(+). It functions in the pathway amino-acid degradation; L-arginine degradation via AST pathway; L-glutamate and succinate from L-arginine: step 4/5. In terms of biological role, catalyzes the NAD-dependent reduction of succinylglutamate semialdehyde into succinylglutamate. This is N-succinylglutamate 5-semialdehyde dehydrogenase from Yersinia pestis bv. Antiqua (strain Antiqua).